The primary structure comprises 81 residues: Protein translocase subunit SecE (81 aa).

Residues 50-70 (VAVILMVILVSTVIYFVDQIF) traverse the membrane as a helical segment.

It belongs to the SecE/SEC61-gamma family. In terms of assembly, component of the Sec protein translocase complex. Heterotrimer consisting of SecY, SecE and SecG subunits. The heterotrimers can form oligomers, although 1 heterotrimer is thought to be able to translocate proteins. Interacts with the ribosome. Interacts with SecDF, and other proteins may be involved. Interacts with SecA.

It is found in the cell inner membrane. Its subcellular location is the cellular thylakoid membrane. Its function is as follows. Essential subunit of the Sec protein translocation channel SecYEG. Clamps together the 2 halves of SecY. May contact the channel plug during translocation. The protein is Protein translocase subunit SecE of Synechocystis sp. (strain ATCC 27184 / PCC 6803 / Kazusa).